We begin with the raw amino-acid sequence, 141 residues long: Large ribosomal subunit protein uL14 (141 aa).

This sequence belongs to the universal ribosomal protein uL14 family. Part of the 50S ribosomal subunit. Forms a cluster with proteins L3 and L24e, part of which may contact the 16S rRNA in 2 intersubunit bridges.

Its function is as follows. Binds to 23S rRNA. Forms part of two intersubunit bridges in the 70S ribosome. This chain is Large ribosomal subunit protein uL14, found in Pyrococcus furiosus (strain ATCC 43587 / DSM 3638 / JCM 8422 / Vc1).